Here is a 1142-residue protein sequence, read N- to C-terminus: Potassium channel subfamily T member 2 (1142 aa).

Over Met1–Arg63 the chain is Cytoplasmic. A helical membrane pass occupies residues Leu64–Glu84. Residues Lys85 to Ser101 are Extracellular-facing. Residue Asn99 is glycosylated (N-linked (GlcNAc...) asparagine). The chain crosses the membrane as a helical span at residues Leu102–Leu122. Over Gly123–Arg137 the chain is Cytoplasmic. The chain crosses the membrane as a helical span at residues Val138–Thr158. At Leu159–Arg160 the chain is on the extracellular side. Residues Asn161 to Ala173 traverse the membrane as a helical segment. Residues Lys174–Gln198 are Cytoplasmic-facing. Residues Val199–His219 form a helical membrane-spanning segment. The Extracellular portion of the chain corresponds to Leu220–Asn228. The segment at residues Leu229–Thr249 is an intramembrane region (pore-forming). Over Pro250–Lys256 the chain is Extracellular. The helical transmembrane segment at Leu257 to Leu277 threads the bilayer. The Cytoplasmic segment spans residues Ala278–Leu1142. 2 consecutive RCK N-terminal domains span residues Glu299–Val435 and Asn725–Leu865. 2 disordered regions span residues Asp989–Thr1044 and Pro1118–Leu1142. Residues Leu1017 to Gly1037 show a composition bias toward basic residues. The segment covering Pro1118–Cys1129 has biased composition (polar residues).

The protein belongs to the potassium channel family. Calcium-activated (TC 1.A.1.3) subfamily. KCa4.2/KCNT2 sub-subfamily. Homotetramer. Forms heteromer with KCNT1; heteromeric channels differ from those of homomeric channels in their unitary conductance, kinetic behavior, subcellular localization, and response to activation of protein kinase C. Post-translationally, phosphorylated by protein kinase C. Phosphorylation of the C-terminal domain inhibits channel activity. Detected in brain, and at low levels in heart. Detected in brainstem, including auditory neurons such as the medial nucleus of the trapezoid body. Detected in the olfactory bulb, red nucleus, facial nucleus, pontine nucleus, oculomotor nucleus, substantia nigra, deep cerebellar nuclei, vestibular nucleus, and the thalamus. Detected in hippocampal CA1, CA2, and CA3 regions, the dentate gyrus, supraoptic nucleus, hypothalamus, dorsal root ganglion, and cortical layers II, III, and V. Detected in striatum cholinergic interneurons.

It is found in the cell membrane. It carries out the reaction K(+)(in) = K(+)(out). With respect to regulation, are normally in a closed state unless activated by an increase in intracellular Na(+) and Cl(-). Inhibited upon stimulation of G-protein coupled receptors, such as CHRM1 and GRM1. There is conflicting data about the effect of ATP on KNCT2 channels activity. Intracellular ATP was initially report to inhibit the channel activity. However, others studies conclude that KNCT2 channels are not inhibited by intracellular ATP. Sodium-activated and chloride-activated potassium channel. Produces rapidly activating outward rectifier K(+) currents. Contributes to regulate neuronal excitability. This chain is Potassium channel subfamily T member 2 (Kcnt2), found in Rattus norvegicus (Rat).